The chain runs to 411 residues: Serine hydroxymethyltransferase (411 aa).

(6S)-5,6,7,8-tetrahydrofolate contacts are provided by residues leucine 119 and 123–125 (GHL). The residue at position 228 (lysine 228) is an N6-(pyridoxal phosphate)lysine. 351–353 (SPF) is a binding site for (6S)-5,6,7,8-tetrahydrofolate.

Belongs to the SHMT family. As to quaternary structure, homodimer. It depends on pyridoxal 5'-phosphate as a cofactor.

Its subcellular location is the cytoplasm. It carries out the reaction (6R)-5,10-methylene-5,6,7,8-tetrahydrofolate + glycine + H2O = (6S)-5,6,7,8-tetrahydrofolate + L-serine. It functions in the pathway one-carbon metabolism; tetrahydrofolate interconversion. Its pathway is amino-acid biosynthesis; glycine biosynthesis; glycine from L-serine: step 1/1. Catalyzes the reversible interconversion of serine and glycine with tetrahydrofolate (THF) serving as the one-carbon carrier. This reaction serves as the major source of one-carbon groups required for the biosynthesis of purines, thymidylate, methionine, and other important biomolecules. Also exhibits THF-independent aldolase activity toward beta-hydroxyamino acids, producing glycine and aldehydes, via a retro-aldol mechanism. The protein is Serine hydroxymethyltransferase of Clostridium botulinum (strain Eklund 17B / Type B).